The chain runs to 146 residues: Hemoglobin subunit beta (146 aa).

V1 is modified (N-acetylvaline). One can recognise a Globin domain in the interval 2–146 (HLTGEEKAAV…VANALAHKYH (145 aa)). Residue T12 is modified to Phosphothreonine. A Phosphoserine modification is found at S44. Residue K59 is modified to N6-acetyllysine. Residue H63 coordinates heme b. K82 carries the N6-acetyllysine modification. Residue H92 coordinates heme b. C93 is subject to S-nitrosocysteine. K144 is subject to N6-acetyllysine.

The protein belongs to the globin family. As to quaternary structure, heterotetramer of two alpha chains and two beta chains. Red blood cells.

In terms of biological role, involved in oxygen transport from the lung to the various peripheral tissues. This chain is Hemoglobin subunit beta (HBB), found in Martes foina (Beech marten).